Reading from the N-terminus, the 287-residue chain is Pantothenate synthetase (287 aa).

Residue 30–37 (MGNLHSGH) participates in ATP binding. Residue His37 is the Proton donor of the active site. Position 61 (Gln61) interacts with (R)-pantoate. Residue Gln61 participates in beta-alanine binding. 149-152 (GEKD) serves as a coordination point for ATP. Residue Gln155 participates in (R)-pantoate binding. ATP is bound by residues Val178 and 186–189 (LSSR).

This sequence belongs to the pantothenate synthetase family. Homodimer.

The protein localises to the cytoplasm. The catalysed reaction is (R)-pantoate + beta-alanine + ATP = (R)-pantothenate + AMP + diphosphate + H(+). The protein operates within cofactor biosynthesis; (R)-pantothenate biosynthesis; (R)-pantothenate from (R)-pantoate and beta-alanine: step 1/1. Catalyzes the condensation of pantoate with beta-alanine in an ATP-dependent reaction via a pantoyl-adenylate intermediate. This Pseudomonas putida (strain ATCC 47054 / DSM 6125 / CFBP 8728 / NCIMB 11950 / KT2440) protein is Pantothenate synthetase.